Reading from the N-terminus, the 203-residue chain is Protein GrpE 2 (203 aa).

A compositionally biased stretch (basic and acidic residues) spans 1–12; the sequence is MPTRPQEPDRAA. Residues 1–64 form a disordered region; sequence MPTRPQEPDR…APAEDEYTTA (64 aa). Positions 45–56 are enriched in low complexity; that stretch reads GEPGPDAAGPAP.

Belongs to the GrpE family. In terms of assembly, homodimer.

It is found in the cytoplasm. Participates actively in the response to hyperosmotic and heat shock by preventing the aggregation of stress-denatured proteins, in association with DnaK and GrpE. It is the nucleotide exchange factor for DnaK and may function as a thermosensor. Unfolded proteins bind initially to DnaJ; upon interaction with the DnaJ-bound protein, DnaK hydrolyzes its bound ATP, resulting in the formation of a stable complex. GrpE releases ADP from DnaK; ATP binding to DnaK triggers the release of the substrate protein, thus completing the reaction cycle. Several rounds of ATP-dependent interactions between DnaJ, DnaK and GrpE are required for fully efficient folding. In Streptomyces avermitilis (strain ATCC 31267 / DSM 46492 / JCM 5070 / NBRC 14893 / NCIMB 12804 / NRRL 8165 / MA-4680), this protein is Protein GrpE 2.